We begin with the raw amino-acid sequence, 721 residues long: Long-chain-fatty-acid--CoA ligase ACSBG1 (721 aa).

Positions 1 to 64 (MPRGSEAGYC…SHGLELSAPE (64 aa)) are disordered. Residues 26 to 52 (QQGASLGTSQDNSQTSSLIDGQTLSKE) show a composition bias toward polar residues. Phosphoserine is present on residues Ser-34, Ser-50, Ser-53, and Ser-70. Residues 279-287 (TSGTTGNPK), 469-474 (AGYGLS), Asp-547, and Arg-562 contribute to the ATP site. The residue at position 655 (Tyr-655) is a Phosphotyrosine. Lys-698 contributes to the ATP binding site.

It belongs to the ATP-dependent AMP-binding enzyme family. Bubblegum subfamily. Mainly expressed in brain. Also expressed in adrenal gland and testis. In brain, it is present in cerebral cortical and cerebellar neurons and in steroidogenic cells of the adrenal gland, testis and ovary (at protein level).

It is found in the cytoplasm. It localises to the cytoplasmic vesicle. The protein resides in the microsome. The protein localises to the endoplasmic reticulum. Its subcellular location is the cell membrane. The catalysed reaction is a long-chain fatty acid + ATP + CoA = a long-chain fatty acyl-CoA + AMP + diphosphate. It carries out the reaction (E)-hexadec-2-enoate + ATP + CoA = (2E)-hexadecenoyl-CoA + AMP + diphosphate. The enzyme catalyses hexadecanoate + ATP + CoA = hexadecanoyl-CoA + AMP + diphosphate. Functionally, catalyzes the conversion of fatty acids such as long-chain and very long-chain fatty acids to their active form acyl-CoAs for both synthesis of cellular lipids, and degradation via beta-oxidation. Can activate diverse saturated, monosaturated and polyunsaturated fatty acids. This Mus musculus (Mouse) protein is Long-chain-fatty-acid--CoA ligase ACSBG1.